The chain runs to 539 residues: MKFDPEKIKRDAKENFDLTWNEGKKLVRTPTLNERYPRTILKYGKAHPVYDTIQKLREAYLRMGFEEMMNPLIVDDKEVHKQFGSEALAVLDRCFYLAGLPRPNVGISDERTAEVKEILGDIGNDGVEKIRQVLHSYKKGKIEGDDLVPEISTVLGVSDALVADMIDKVFPEFKELVPQASTKTLRSHMTSGWFISLGALLERQEPPFHFFSVDRCFRREQQEDASRLMTYYSASCVIMDEGVTVDHGKAVSEGLLSQFGFEKFLFRPDEKRSKYYIPDTQTEVFAFHPKLVGSNSKYSDGWIEIATFGIYSPTALAQYDIPCPVMNLGLGVERLAMILHDAPDIRSLTYPQIPQYTEWEMSDGELAKQVFVDKVPETSEGLAIAASIVSQCELHGEEPSPCEFPSWEGEICGRKVKVSVIEPEENTKLCGPAAFNEVVAYQGDIMGIPNTKKWQKAFENHSARAGIRFIEAFAAQAAREIEEAALSGATEHIVRIRIAKVPSEVNLRIGSIAQRYVTGKKKKIDMRGPVFTSVKAEFV.

Substrate is bound by residues 188-190 (HMT), 233-235 (SAS), 275-276 (YY), and asparagine 327.

Belongs to the class-II aminoacyl-tRNA synthetase family. O-phosphoseryl-tRNA(Cys) synthetase subfamily. Homotetramer. Interacts with SepCysS.

It catalyses the reaction tRNA(Cys) + O-phospho-L-serine + ATP = O-phospho-L-seryl-tRNA(Cys) + AMP + diphosphate. Its function is as follows. Catalyzes the attachment of O-phosphoserine (Sep) to tRNA(Cys). This chain is O-phosphoserine--tRNA(Cys) ligase, found in Methanosarcina barkeri (strain Fusaro / DSM 804).